A 206-amino-acid polypeptide reads, in one-letter code: Ribosomal RNA small subunit methyltransferase G (206 aa).

S-adenosyl-L-methionine contacts are provided by residues Gly-74, Leu-79, Val-125–Glu-126, and Arg-140.

This sequence belongs to the methyltransferase superfamily. RNA methyltransferase RsmG family.

Its subcellular location is the cytoplasm. The enzyme catalyses guanosine(527) in 16S rRNA + S-adenosyl-L-methionine = N(7)-methylguanosine(527) in 16S rRNA + S-adenosyl-L-homocysteine. Functionally, specifically methylates the N7 position of guanine in position 527 of 16S rRNA. The polypeptide is Ribosomal RNA small subunit methyltransferase G (Shewanella amazonensis (strain ATCC BAA-1098 / SB2B)).